The sequence spans 121 residues: Small ribosomal subunit protein uS13 (121 aa).

Residues 97 to 121 (VRGQRTRTNARTRRGARKTVAGRKK) form a disordered region. Positions 100–121 (QRTRTNARTRRGARKTVAGRKK) are enriched in basic residues.

It belongs to the universal ribosomal protein uS13 family. As to quaternary structure, part of the 30S ribosomal subunit. Forms a loose heterodimer with protein S19. Forms two bridges to the 50S subunit in the 70S ribosome.

Located at the top of the head of the 30S subunit, it contacts several helices of the 16S rRNA. In the 70S ribosome it contacts the 23S rRNA (bridge B1a) and protein L5 of the 50S subunit (bridge B1b), connecting the 2 subunits; these bridges are implicated in subunit movement. Contacts the tRNAs in the A and P-sites. The polypeptide is Small ribosomal subunit protein uS13 (Prochlorococcus marinus (strain NATL1A)).